The chain runs to 172 residues: Macro domain-containing protein lp_3408 (172 aa).

The Macro domain occupies 1-171 (MVEIKVIHGD…VFSTALAALT (171 aa)).

This sequence belongs to the MacroD-type family.

The protein is Macro domain-containing protein lp_3408 of Lactiplantibacillus plantarum (strain ATCC BAA-793 / NCIMB 8826 / WCFS1) (Lactobacillus plantarum).